We begin with the raw amino-acid sequence, 550 residues long: Rhodopsin kinase grk7-b (550 aa).

Residues 22–45 are disordered; the sequence is SSEGDAKELQKRRKSLSLPPPDVS. S36 carries the post-translational modification Phosphoserine. The 118-residue stretch at 57-174 folds into the RGS domain; that stretch reads YQSICVEQPI…QNSPFYDRFL (118 aa). Residues 189-451 enclose the Protein kinase domain; the sequence is FYEFRILGKG…DDDPRKHAFF (263 aa). Residues 195 to 203 and K218 each bind ATP; that span reads LGKGGFGEV. Residue D314 is the Proton acceptor of the active site. An AGC-kinase C-terminal domain is found at 452–517; it reads KSINFQRLEA…GAVPISWQKE (66 aa). At S487 the chain carries Phosphoserine. The disordered stretch occupies residues 531–550; it reads SREVTGGGNSGEKSGVCSIL. At C547 the chain carries Cysteine methyl ester. C547 carries S-geranylgeranyl cysteine lipidation. Residues 548–550 constitute a propeptide, removed in mature form; sequence SIL.

The protein belongs to the protein kinase superfamily. AGC Ser/Thr protein kinase family. GPRK subfamily. Autophosphorylated in vitro at Ser-487. Phosphorylation at Ser-36 is regulated by light and activated by cAMP. Retina, cones.

The protein resides in the membrane. It carries out the reaction L-threonyl-[rhodopsin] + ATP = O-phospho-L-threonyl-[rhodopsin] + ADP + H(+). It catalyses the reaction L-seryl-[rhodopsin] + ATP = O-phospho-L-seryl-[rhodopsin] + ADP + H(+). In terms of biological role, retina-specific kinase involved in the shutoff of the photoresponse and adaptation to changing light conditions via cone opsin phosphorylation, including rhodopsin (RHO). This is Rhodopsin kinase grk7-b (grk7-b) from Xenopus laevis (African clawed frog).